The primary structure comprises 104 residues: MNALSIPTWMVHVSSVIEWIVAIALVSRYATKAGYGHWRALAWGMVPALVSATCACTWHFFDNASQLDWLVTLQALTTVIGNITLCLAAWWIYRQSAQPSAPKP.

3 helical membrane-spanning segments follow: residues 6–26, 41–61, and 73–93; these read IPTW…IALV, LAWG…WHFF, and LQAL…WWIY.

It belongs to the ycf49 family.

Its subcellular location is the cell membrane. This is Ycf49-like protein from Synechocystis sp. (strain ATCC 27184 / PCC 6803 / Kazusa).